Here is a 758-residue protein sequence, read N- to C-terminus: Inhibitor of nuclear factor kappa-B kinase subunit alpha (758 aa).

The Protein kinase domain maps to W15 to C301. ATP contacts are provided by residues L21–V29 and K44. D145 functions as the Proton acceptor in the catalytic mechanism. The interval L456 to L477 is leucine-zipper. The NEMO-binding stretch occupies residues Q741–T746.

It belongs to the protein kinase superfamily. Ser/Thr protein kinase family. I-kappa-B kinase subfamily. Directly interacts with ikbkg/nemo.

The protein resides in the cytoplasm. It is found in the nucleus. The catalysed reaction is L-seryl-[I-kappa-B protein] + ATP = O-phospho-L-seryl-[I-kappa-B protein] + ADP + H(+). Activated when phosphorylated and inactivated when dephosphorylated. Functionally, phosphorylates inhibitors of NF-kappa-B thus leading to the dissociation of the inhibitor/NF-kappa-B complex and ultimately the degradation of the inhibitor. Phosphorylates 'Ser-10' of histone H3 at NF-kappa-B-regulated promoters during inflammatory responses triggered by cytokines. The chain is Inhibitor of nuclear factor kappa-B kinase subunit alpha (chuk) from Danio rerio (Zebrafish).